Reading from the N-terminus, the 442-residue chain is tRNA modification GTPase MnmE (442 aa).

Arg-24, Glu-84, and Arg-124 together coordinate (6S)-5-formyl-5,6,7,8-tetrahydrofolate. The 149-residue stretch at 218–366 folds into the TrmE-type G domain; sequence GARVALFGPV…LRDDMLGRLW (149 aa). Residues 228–233, 247–253, and 272–275 contribute to the GTP site; these read NAGKST, DDEPGTT, and DTAG. 2 residues coordinate Mg(2+): Ser-232 and Thr-253. Lys-442 is a binding site for (6S)-5-formyl-5,6,7,8-tetrahydrofolate.

This sequence belongs to the TRAFAC class TrmE-Era-EngA-EngB-Septin-like GTPase superfamily. TrmE GTPase family. In terms of assembly, homodimer. Heterotetramer of two MnmE and two MnmG subunits. The cofactor is K(+).

The protein resides in the cytoplasm. Exhibits a very high intrinsic GTPase hydrolysis rate. Involved in the addition of a carboxymethylaminomethyl (cmnm) group at the wobble position (U34) of certain tRNAs, forming tRNA-cmnm(5)s(2)U34. This Myxococcus xanthus (strain DK1622) protein is tRNA modification GTPase MnmE.